Reading from the N-terminus, the 244-residue chain is Small ribosomal subunit protein uS3 (244 aa).

The region spanning 39-107 (VREMLRKKLA…PAHINVTEVR (69 aa)) is the KH type-2 domain. The interval 213 to 244 (VGQEKQDDSPRNDRNDRGDRGDRPSRPAREAR) is disordered. Positions 216 to 244 (EKQDDSPRNDRNDRGDRGDRPSRPAREAR) are enriched in basic and acidic residues.

It belongs to the universal ribosomal protein uS3 family. As to quaternary structure, part of the 30S ribosomal subunit. Forms a tight complex with proteins S10 and S14.

Functionally, binds the lower part of the 30S subunit head. Binds mRNA in the 70S ribosome, positioning it for translation. The sequence is that of Small ribosomal subunit protein uS3 from Xanthomonas euvesicatoria pv. vesicatoria (strain 85-10) (Xanthomonas campestris pv. vesicatoria).